A 732-amino-acid polypeptide reads, in one-letter code: Elongation factor 2 (732 aa).

In terms of domain architecture, tr-type G spans 19-260 (ERIRNIGIAA…MVVKHLPNPI (242 aa)). GTP contacts are provided by residues 28–35 (AHIDHGKT), 94–98 (DTPGH), and 148–151 (NKVD). At H597 the chain carries Diphthamide.

The protein belongs to the TRAFAC class translation factor GTPase superfamily. Classic translation factor GTPase family. EF-G/EF-2 subfamily.

Its subcellular location is the cytoplasm. Its function is as follows. Catalyzes the GTP-dependent ribosomal translocation step during translation elongation. During this step, the ribosome changes from the pre-translocational (PRE) to the post-translocational (POST) state as the newly formed A-site-bound peptidyl-tRNA and P-site-bound deacylated tRNA move to the P and E sites, respectively. Catalyzes the coordinated movement of the two tRNA molecules, the mRNA and conformational changes in the ribosome. The chain is Elongation factor 2 (fusA) from Pyrococcus abyssi (strain GE5 / Orsay).